An 86-amino-acid polypeptide reads, in one-letter code: Candiduxin-2 (86 aa).

An N-terminal signal peptide occupies residues 1-21 (MKTLLLTLVVLTIACLDLGYT). 4 disulfides stabilise this stretch: Cys-24/Cys-45, Cys-38/Cys-62, Cys-66/Cys-78, and Cys-79/Cys-84.

The protein belongs to the three-finger toxin family. Short-chain subfamily. Orphan group IX sub-subfamily. As to expression, expressed by the venom gland.

It is found in the secreted. This Bungarus candidus (Malayan krait) protein is Candiduxin-2.